The following is a 582-amino-acid chain: Calcium-dependent protein kinase 24 (582 aa).

The segment at 1 to 36 (MGSCVSSPLKGSPFGKRPVRRRHSSNSRTSSVPRFD) is disordered. G2 carries the N-myristoyl glycine lipid modification. The Protein kinase domain maps to 66 to 324 (YDLGKELGRG…VQEVLEHPWI (259 aa)). Residues 72–80 (LGRGEFGVT) and K95 each bind ATP. The active-site Proton acceptor is the D190. The residue at position 230 (S230) is a Phosphoserine. Residues 330–360 (APNVNLGDNVRTKIQQFLLMNRFKKKVLRIV) are autoinhibitory domain. EF-hand domains are found at residues 367–402 (EEIA…IGQV), 403–438 (VPDG…LKRM), 439–474 (GCDE…DKLG), and 478–513 (GNDQ…GTDW). Residues D380, D382, N384, H386, E391, D416, D418, N420, M422, E427, D452, N454, N456, E463, D491, N493, D495, and R497 each contribute to the Ca(2+) site. Phosphoserine is present on S499. E502 serves as a coordination point for Ca(2+).

Belongs to the protein kinase superfamily. Ser/Thr protein kinase family. CDPK subfamily.

It localises to the membrane. It catalyses the reaction L-seryl-[protein] + ATP = O-phospho-L-seryl-[protein] + ADP + H(+). The catalysed reaction is L-threonyl-[protein] + ATP = O-phospho-L-threonyl-[protein] + ADP + H(+). Its activity is regulated as follows. Activated by calcium. Autophosphorylation may play an important role in the regulation of the kinase activity. Its function is as follows. May play a role in signal transduction pathways that involve calcium as a second messenger. The protein is Calcium-dependent protein kinase 24 (CPK24) of Arabidopsis thaliana (Mouse-ear cress).